The following is a 230-amino-acid chain: Cytidylate kinase (230 aa).

12 to 20 (GPSGAGKGT) provides a ligand contact to ATP.

The protein belongs to the cytidylate kinase family. Type 1 subfamily.

It localises to the cytoplasm. It catalyses the reaction CMP + ATP = CDP + ADP. The enzyme catalyses dCMP + ATP = dCDP + ADP. This chain is Cytidylate kinase, found in Aeromonas hydrophila subsp. hydrophila (strain ATCC 7966 / DSM 30187 / BCRC 13018 / CCUG 14551 / JCM 1027 / KCTC 2358 / NCIMB 9240 / NCTC 8049).